The chain runs to 251 residues: uncharacterized protein (251 aa).

The next 7 helical transmembrane spans lie at 48-68, 88-108, 110-130, 132-152, 158-178, 184-204, and 209-229; these read WMVGGVTILTFMALLYLVELI, VLWGISFAPVLHANWQHLVAN, IPLLVLGFLIALAGLSRFIWV, AMVWIFGGSATWLIGNMGSSF, IGVSGLIFGWLAFLLVFGLFV, IIGCMVLFAYGGVLLGVMPVL, and GVSWQGHLCGAISGVVAAYLL.

It to M.tuberculosis Rv1337.

Its subcellular location is the cell membrane. This is an uncharacterized protein from Mycobacterium leprae (strain TN).